A 300-amino-acid chain; its full sequence is 4-hydroxy-tetrahydrodipicolinate synthase (300 aa).

T45 contacts pyruvate. Y140 serves as the catalytic Proton donor/acceptor. Residue K169 is the Schiff-base intermediate with substrate of the active site. Residue I210 coordinates pyruvate.

The protein belongs to the DapA family. Homotetramer; dimer of dimers.

Its subcellular location is the cytoplasm. It carries out the reaction L-aspartate 4-semialdehyde + pyruvate = (2S,4S)-4-hydroxy-2,3,4,5-tetrahydrodipicolinate + H2O + H(+). It functions in the pathway amino-acid biosynthesis; L-lysine biosynthesis via DAP pathway; (S)-tetrahydrodipicolinate from L-aspartate: step 3/4. In terms of biological role, catalyzes the condensation of (S)-aspartate-beta-semialdehyde [(S)-ASA] and pyruvate to 4-hydroxy-tetrahydrodipicolinate (HTPA). The polypeptide is 4-hydroxy-tetrahydrodipicolinate synthase (Helicobacter pylori (strain G27)).